Consider the following 539-residue polypeptide: Glutamyl-tRNA(Gln) amidotransferase subunit A, mitochondrial (539 aa).

Residues Lys94 and Ser181 each act as charge relay system in the active site. Ser205 serves as the catalytic Acyl-ester intermediate.

The protein belongs to the amidase family. GatA subfamily. In terms of assembly, subunit of the heterotrimeric GatCAB amidotransferase (AdT) complex, composed of A, B and C subunits.

It localises to the mitochondrion. It carries out the reaction L-glutamyl-tRNA(Gln) + L-glutamine + ATP + H2O = L-glutaminyl-tRNA(Gln) + L-glutamate + ADP + phosphate + H(+). In terms of biological role, allows the formation of correctly charged Gln-tRNA(Gln) through the transamidation of misacylated Glu-tRNA(Gln) in the mitochondria. The reaction takes place in the presence of glutamine and ATP through an activated gamma-phospho-Glu-tRNA(Gln). The sequence is that of Glutamyl-tRNA(Gln) amidotransferase subunit A, mitochondrial from Mycosarcoma maydis (Corn smut fungus).